A 328-amino-acid chain; its full sequence is Arabinose 5-phosphate isomerase KdsD (328 aa).

In terms of domain architecture, SIS spans 41 to 184; it reads ACEKMFNCTG…AVALLKARGF (144 aa). Residues 75–76, histidine 82, histidine 88, 114–123, and 148–150 contribute to the substrate site; these read GT, ALIPVLKRLH, and KVP. Position 82 (histidine 82) interacts with Zn(2+). In terms of domain architecture, CBS 1 spans 210 to 268; sequence MHTGDEIPHVNKHATLRDALLEITRKNLGMTVICDESMKIDGIFTDGDLRRVFDMGGDM. Glutamate 275 contributes to the substrate binding site. The CBS 2 domain occupies 277 to 328; it reads MTPGGIRVRPGILAVDALNLMQSRHITSVLVADGDQLLGVLHMHDLLRAGVV.

The protein belongs to the SIS family. GutQ/KpsF subfamily. In terms of assembly, homotetramer.

The catalysed reaction is D-arabinose 5-phosphate = D-ribulose 5-phosphate. The protein operates within carbohydrate biosynthesis; 3-deoxy-D-manno-octulosonate biosynthesis; 3-deoxy-D-manno-octulosonate from D-ribulose 5-phosphate: step 1/3. It participates in bacterial outer membrane biogenesis; lipopolysaccharide biosynthesis. Involved in the biosynthesis of 3-deoxy-D-manno-octulosonate (KDO), a unique 8-carbon sugar component of lipopolysaccharides (LPSs). Catalyzes the reversible aldol-ketol isomerization between D-ribulose 5-phosphate (Ru5P) and D-arabinose 5-phosphate (A5P). This chain is Arabinose 5-phosphate isomerase KdsD (kdsD), found in Salmonella typhimurium (strain LT2 / SGSC1412 / ATCC 700720).